A 306-amino-acid chain; its full sequence is 3-methyl-2-oxobutanoate hydroxymethyltransferase (306 aa).

Mg(2+)-binding residues include Asp-53 and Asp-96. Residues 53 to 54 (DS), Asp-96, and Lys-126 each bind 3-methyl-2-oxobutanoate. Position 128 (Glu-128) interacts with Mg(2+). Glu-195 acts as the Proton acceptor in catalysis.

Belongs to the PanB family. Homodecamer; pentamer of dimers. It depends on Mg(2+) as a cofactor.

It localises to the cytoplasm. It carries out the reaction 3-methyl-2-oxobutanoate + (6R)-5,10-methylene-5,6,7,8-tetrahydrofolate + H2O = 2-dehydropantoate + (6S)-5,6,7,8-tetrahydrofolate. It functions in the pathway cofactor biosynthesis; (R)-pantothenate biosynthesis; (R)-pantoate from 3-methyl-2-oxobutanoate: step 1/2. Catalyzes the reversible reaction in which hydroxymethyl group from 5,10-methylenetetrahydrofolate is transferred onto alpha-ketoisovalerate to form ketopantoate. The sequence is that of 3-methyl-2-oxobutanoate hydroxymethyltransferase from Anaeromyxobacter sp. (strain K).